Here is a 207-residue protein sequence, read N- to C-terminus: LexA repressor (207 aa).

Residues 28–48 (RAEIARRLGFKSPNAAEEHLK) constitute a DNA-binding region (H-T-H motif). Residues Ser-126 and Lys-163 each act as for autocatalytic cleavage activity in the active site.

The protein belongs to the peptidase S24 family. In terms of assembly, homodimer.

It catalyses the reaction Hydrolysis of Ala-|-Gly bond in repressor LexA.. Functionally, represses a number of genes involved in the response to DNA damage (SOS response), including recA and lexA. In the presence of single-stranded DNA, RecA interacts with LexA causing an autocatalytic cleavage which disrupts the DNA-binding part of LexA, leading to derepression of the SOS regulon and eventually DNA repair. This chain is LexA repressor, found in Marinomonas sp. (strain MWYL1).